The sequence spans 300 residues: Diphthine methyl ester synthase (300 aa).

Residues L9, D85, G88, S113–V114, L164, L222, and H247 each bind S-adenosyl-L-methionine.

The protein belongs to the diphthine synthase family.

The protein localises to the cytoplasm. The catalysed reaction is 2-[(3S)-amino-3-carboxypropyl]-L-histidyl-[translation elongation factor 2] + 4 S-adenosyl-L-methionine = diphthine methyl ester-[translation elongation factor 2] + 4 S-adenosyl-L-homocysteine + 3 H(+). The protein operates within protein modification; peptidyl-diphthamide biosynthesis. S-adenosyl-L-methionine-dependent methyltransferase that catalyzes four methylations of the modified target histidine residue in translation elongation factor 2 (EF-2), to form an intermediate called diphthine methyl ester. The four successive methylation reactions represent the second step of diphthamide biosynthesis. The protein is Diphthine methyl ester synthase (DPH5) of Yarrowia lipolytica (strain CLIB 122 / E 150) (Yeast).